The primary structure comprises 311 residues: tRNA-cytidine(32) 2-sulfurtransferase (311 aa).

Positions Ser-47–Ser-52 match the PP-loop motif motif. Residues Cys-122, Cys-125, and Cys-213 each coordinate [4Fe-4S] cluster.

This sequence belongs to the TtcA family. As to quaternary structure, homodimer. The cofactor is Mg(2+). Requires [4Fe-4S] cluster as cofactor.

Its subcellular location is the cytoplasm. It carries out the reaction cytidine(32) in tRNA + S-sulfanyl-L-cysteinyl-[cysteine desulfurase] + AH2 + ATP = 2-thiocytidine(32) in tRNA + L-cysteinyl-[cysteine desulfurase] + A + AMP + diphosphate + H(+). It participates in tRNA modification. Functionally, catalyzes the ATP-dependent 2-thiolation of cytidine in position 32 of tRNA, to form 2-thiocytidine (s(2)C32). The sulfur atoms are provided by the cysteine/cysteine desulfurase (IscS) system. In Salmonella paratyphi A (strain ATCC 9150 / SARB42), this protein is tRNA-cytidine(32) 2-sulfurtransferase.